The primary structure comprises 517 residues: Bifunctional purine biosynthesis protein PurH (517 aa).

Residues 1 to 151 (MTQERKIKRA…KNFAHVAVLC (151 aa)) enclose the MGS-like domain.

This sequence belongs to the PurH family.

The catalysed reaction is (6R)-10-formyltetrahydrofolate + 5-amino-1-(5-phospho-beta-D-ribosyl)imidazole-4-carboxamide = 5-formamido-1-(5-phospho-D-ribosyl)imidazole-4-carboxamide + (6S)-5,6,7,8-tetrahydrofolate. The enzyme catalyses IMP + H2O = 5-formamido-1-(5-phospho-D-ribosyl)imidazole-4-carboxamide. It participates in purine metabolism; IMP biosynthesis via de novo pathway; 5-formamido-1-(5-phospho-D-ribosyl)imidazole-4-carboxamide from 5-amino-1-(5-phospho-D-ribosyl)imidazole-4-carboxamide (10-formyl THF route): step 1/1. The protein operates within purine metabolism; IMP biosynthesis via de novo pathway; IMP from 5-formamido-1-(5-phospho-D-ribosyl)imidazole-4-carboxamide: step 1/1. This Elusimicrobium minutum (strain Pei191) protein is Bifunctional purine biosynthesis protein PurH.